We begin with the raw amino-acid sequence, 396 residues long: DNA polymerase IV (396 aa).

The region spanning 2 to 182 is the UmuC domain; it reads ILHVDMDAFY…LPVSRLWGVG (181 aa). Positions 6 and 100 each coordinate Mg(2+). The active site involves Glu101.

Belongs to the DNA polymerase type-Y family. As to quaternary structure, monomer. The cofactor is Mg(2+).

The protein resides in the cytoplasm. The catalysed reaction is DNA(n) + a 2'-deoxyribonucleoside 5'-triphosphate = DNA(n+1) + diphosphate. Functionally, poorly processive, error-prone DNA polymerase involved in untargeted mutagenesis. Copies undamaged DNA at stalled replication forks, which arise in vivo from mismatched or misaligned primer ends. These misaligned primers can be extended by PolIV. Exhibits no 3'-5' exonuclease (proofreading) activity. May be involved in translesional synthesis, in conjunction with the beta clamp from PolIII. The polypeptide is DNA polymerase IV (Rhodopirellula baltica (strain DSM 10527 / NCIMB 13988 / SH1)).